The following is a 136-amino-acid chain: Salivary protein 15 Iric-2 (136 aa).

A signal peptide spans 1–22 (MESFVAMKVVCIVLLFVIAAEA). N-linked (GlcNAc...) asparagine glycosylation occurs at Asn105. A CD4-binding region spans residues 117–136 (GPKNQTCENKDQCVPHIPGC).

Belongs to the salp15 family. As to quaternary structure, interacts with host CD4. Interacts with host DC-SIGN (CD209). Interacts with Borrelia outer surface protein C (OspC). As to expression, expressed in salivary glands. Detected in fed adult female.

The protein resides in the secreted. Functionally, salivary tick protein that downregulates host immune system by binding to both dendritic cells, and CD4(+) T cells. Specifically binds to the CD4 coreceptor on T cells. This interaction prevents the activation of the Src kinase, Lck, and its downstream substrate Zap-70, and results in deficient activation of PLCgamma1, the repression of calcium fluxes triggered by T-cell antigen receptor (TCR) ligation, and a subsequent reduction in interleukin-2 production. This salivary protein also binds to DC-SIGN (CD209) on dendritic cells (DC) and activates the Raf-1 kinase/MEK signaling pathway that results in down-regulating expression of pro-inflammatory cytokines. Furthermore, it inhibits T cell proliferation induced by DCs. In addition, it inhibits in vitro keratinocyte inflammation induced by Borrelia burgdorferi or by the major outer surface protein (OspC) of Borrelia. In addition, it downregulates chemokines and monocyte chemoattractant protein 1, as well as several antimicrobial peptides such as defensins, cathelicidin, psoriasin, and RNase 7. Apart from its immunomodulatory activities, it is also associated with protection of Borrelia spirochetes from antibody-mediated killing through its binding to OspC. In vivo, tests on different immune disease animal models show promising therapeutic results, e.g., in inhibiting HIV infection, experimental autoimmune encephalomyelitis, transplantation rejection, and asthma. In Ixodes ricinus (Common tick), this protein is Salivary protein 15 Iric-2.